The primary structure comprises 235 residues: MSIEVVDVRKHEHHFGVYVVKFEDGTERLATKNLTPGKRVYGERLIKWRDEEYREWNPYRSKLAAAIVNGIKFIPIQEGTHMLYLGAASGTTPSHISDIVGERGLIYSVEFSPRVFREFIEKLVDQGRRNVVPILGDARFPYQYAHYVKGVDVVYIDVAQPAQAKILADNADYFLKPGGYVMLVIKAMSIDVTAPATETFKQEINTLKERGFEILETVHLEPYDTAHAMVIAKKK.

S-adenosyl-L-methionine-binding positions include 91-92, 110-111, 137-138, and 157-160; these read TT, EF, DA, and DVAQ.

Belongs to the methyltransferase superfamily. Fibrillarin family. As to quaternary structure, interacts with nop5. Component of box C/D small ribonucleoprotein (sRNP) particles that contain rpl7ae, FlpA and nop5, plus a guide RNA.

Involved in pre-rRNA and tRNA processing. Utilizes the methyl donor S-adenosyl-L-methionine to catalyze the site-specific 2'-hydroxyl methylation of ribose moieties in rRNA and tRNA. Site specificity is provided by a guide RNA that base pairs with the substrate. Methylation occurs at a characteristic distance from the sequence involved in base pairing with the guide RNA. This Pyrobaculum islandicum (strain DSM 4184 / JCM 9189 / GEO3) protein is Fibrillarin-like rRNA/tRNA 2'-O-methyltransferase.